Consider the following 208-residue polypeptide: WEB family protein At2g17940 (208 aa).

Residues 78–113 adopt a coiled-coil conformation; the sequence is RTLQLNTSLSNRIKTLTQELELGKKEIQRLSRTRSS.

It belongs to the WEB family.

This is WEB family protein At2g17940 from Arabidopsis thaliana (Mouse-ear cress).